A 464-amino-acid chain; its full sequence is L-cysteine desulfhydrase-like protein lolT2 (464 aa).

Lysine 227 carries the post-translational modification N6-(pyridoxal phosphate)lysine.

This sequence belongs to the class-V pyridoxal-phosphate-dependent aminotransferase family. Pyridoxal 5'-phosphate is required as a cofactor.

Its pathway is alkaloid biosynthesis. L-cysteine desulfhydrase-like protein; part of the gene cluster that mediates the biosynthesis of loline alkaloids, potent insecticidal agents composed of a pyrrolizidine ring system and an uncommon ether bridge linking carbons 2 and 7. Lolines are structurally differentiated by the various modifications of the L-amino group and include norloline, loline, N-methylloline, N-acetylloline, N-acetylnorloline, and N-formylloline. The first committed step is the condensation of O-acetyl-L-homoserine (derived from L-aspartic acid) and L-proline, probably catalyzed by the gamma-type pyridoxal 5'-phosphate(PLP)-dependent enzyme lolC, to give the diamino diacid, NACPP. Ensuing cyclization, decarboxylation, and acetylation steps yield 1-exo-acetamidopyrrolizidine (AcAP). LolO is required for installation of the ether bridge upon the pathway intermediate, 1-exo-acetamidopyrrolizidine (AcAP). In sequential 2-oxoglutarate- and O(2)-consuming steps, lolO removes hydrogens from C2 and C7 of AcAP to form both carbon-oxygen bonds in N-acetylnorloline (NANL), the precursor to all other lolines. The enzymes lolD, lolE, lolF and lolT have also been proposed to be involved in the ether-bridge installation. Further processing of the exocyclic moiety of NANL by fungal N-acetamidase (LolN), methyltransferase (LolM), and cytochrome P450 (LolP) enzymes, with occasional involvement of a plant acetyltransferase, generates the other known lolines. LolN transforms NANL to norlonine which is monomethylated and dimethylated to respectively lonine and N-methyllonine (NML) by lolM. LolP catalyzes hydroxylation of the methyl group in N-methylloline (NML) and further oxygenation to N-formylloline (NFL). A plant acetyltransferase is responsible for the acetylation of loline to form N-acetylloline (NAL). LolA might interact with aspartate kinase to prevent feedback inhibition of its activity by these end products and thereby promote production of L-homoserine from L-aspartate. This is L-cysteine desulfhydrase-like protein lolT2 from Epichloe uncinata (Endophyte fungus).